Reading from the N-terminus, the 363-residue chain is RNA exonuclease NGL1 (363 aa).

The transit peptide at 1-23 (MFTRRFIPVVQSTKQNIGKYVRK) directs the protein to the mitochondrion.

This sequence belongs to the CCR4/nocturin family.

The protein localises to the mitochondrion. The sequence is that of RNA exonuclease NGL1 (NGL1) from Saccharomyces cerevisiae (strain ATCC 204508 / S288c) (Baker's yeast).